Consider the following 94-residue polypeptide: uncharacterized protein (94 aa).

Residues 1 to 26 (MNDQRDQAVPWATGLAVAGFVAAVIA) form the signal peptide. 2 helical membrane passes run 42 to 62 (LLAVGLNIVAVSGLAPTLWGW) and 71 to 91 (FVLGAAVGVAGAWLALLALTL).

It is found in the cell membrane. This is an uncharacterized protein from Mycobacterium tuberculosis (strain CDC 1551 / Oshkosh).